The following is a 308-amino-acid chain: GTPase Era (308 aa).

Positions R9–E179 constitute an Era-type G domain. A G1 region spans residues G17–S24. G17–S24 is a GTP binding site. Residues Q43–A47 form a G2 region. Residues D64–G67 form a G3 region. Residues D64–L68 and N129–D132 each bind GTP. The interval N129–D132 is G4. The G5 stretch occupies residues I158 to A160. Residues L210–P287 enclose the KH type-2 domain.

The protein belongs to the TRAFAC class TrmE-Era-EngA-EngB-Septin-like GTPase superfamily. Era GTPase family. As to quaternary structure, monomer.

The protein localises to the cytoplasm. It is found in the cell inner membrane. Functionally, an essential GTPase that binds both GDP and GTP, with rapid nucleotide exchange. Plays a role in 16S rRNA processing and 30S ribosomal subunit biogenesis and possibly also in cell cycle regulation and energy metabolism. This chain is GTPase Era, found in Dinoroseobacter shibae (strain DSM 16493 / NCIMB 14021 / DFL 12).